An 88-amino-acid chain; its full sequence is MANTPSAQKAVRKVAARTQINRARRSRVRAFMRKFYDALAGGDKVSAEVAFKNFEPEIMRAVSKGVFHKNTAARKVSRLAKRLKALSV.

The protein belongs to the bacterial ribosomal protein bS20 family.

Functionally, binds directly to 16S ribosomal RNA. The sequence is that of Small ribosomal subunit protein bS20 from Bartonella quintana (strain Toulouse) (Rochalimaea quintana).